Reading from the N-terminus, the 883-residue chain is DNA mismatch repair protein MutS (883 aa).

An ATP-binding site is contributed by 619-626 (GPNMGGKS).

Belongs to the DNA mismatch repair MutS family.

Its function is as follows. This protein is involved in the repair of mismatches in DNA. It is possible that it carries out the mismatch recognition step. This protein has a weak ATPase activity. The protein is DNA mismatch repair protein MutS of Marinomonas sp. (strain MWYL1).